The following is a 178-amino-acid chain: ATP-dependent protease subunit HslV (178 aa).

The active site involves Thr-2. Positions 157, 160, and 163 each coordinate Na(+).

It belongs to the peptidase T1B family. HslV subfamily. In terms of assembly, a double ring-shaped homohexamer of HslV is capped on each side by a ring-shaped HslU homohexamer. The assembly of the HslU/HslV complex is dependent on binding of ATP.

The protein localises to the cytoplasm. It carries out the reaction ATP-dependent cleavage of peptide bonds with broad specificity.. Allosterically activated by HslU binding. Its function is as follows. Protease subunit of a proteasome-like degradation complex believed to be a general protein degrading machinery. This chain is ATP-dependent protease subunit HslV, found in Hamiltonella defensa subsp. Acyrthosiphon pisum (strain 5AT).